We begin with the raw amino-acid sequence, 282 residues long: Kallikrein-11 (282 aa).

Positions 1 to 50 are cleaved as a signal peptide; the sequence is MQRLRWLRDWKSSGRGLTAAKEPGARSSPLQAMRILQLILLALATGLVGG. Positions 51-53 are cleaved as a propeptide — activation peptide; it reads ETR. The 228-residue stretch at 53–280 folds into the Peptidase S1 domain; sequence RIIKGFECKP…YVDWIQETMK (228 aa). 6 cysteine pairs are disulfide-bonded: Cys60/Cys195, Cys79/Cys95, Cys167/Cys269, Cys174/Cys241, Cys206/Cys220, and Cys231/Cys256. Residue His94 is the Charge relay system of the active site. Asn131 is a glycosylation site (N-linked (GlcNAc...) asparagine). The active-site Charge relay system is Asp142. N-linked (GlcNAc...) asparagine glycans are attached at residues Asn197 and Asn213. The Charge relay system role is filled by Ser235. N-linked (GlcNAc...) asparagine glycosylation occurs at Asn242.

Belongs to the peptidase S1 family. Kallikrein subfamily. About 40% of KLK11 is inactivated by internal cleavage after Arg-188. This proteolytic inactivation may be effected by plasminogen. Expressed in brain, skin and prostate. Isoform 1 is expressed preferentially in brain. Isoform 2 is expressed in prostate. Present in seminal plasma at concentrations ranging from 2 to 37 microg/mL (at protein level).

Its subcellular location is the secreted. It localises to the golgi apparatus. Possible multifunctional protease. Efficiently cleaves 'bz-Phe-Arg-4-methylcoumaryl-7-amide', a kallikrein substrate, and weakly cleaves other substrates for kallikrein and trypsin. Cleaves synthetic peptides after arginine but not lysine residues. This is Kallikrein-11 (KLK11) from Homo sapiens (Human).